The chain runs to 33 residues: Photosystem II reaction center protein Psb30 (33 aa).

Residues 5–25 (LALTLVSLVLVVSAGPLVVVL) traverse the membrane as a helical segment.

The protein belongs to the Psb30/Ycf12 family. PSII is composed of 1 copy each of membrane proteins PsbA, PsbB, PsbC, PsbD, PsbE, PsbF, PsbH, PsbI, PsbJ, PsbK, PsbL, PsbM, PsbT, PsbX, PsbY, PsbZ, Psb30/Ycf12, peripheral proteins of the oxygen-evolving complex and a large number of cofactors. It forms dimeric complexes.

It localises to the plastid. The protein localises to the chloroplast thylakoid membrane. In terms of biological role, a core subunit of photosystem II (PSII), required for optimal photosynthesis, probably helps stabilize the reaction center. This chain is Photosystem II reaction center protein Psb30, found in Chlamydomonas reinhardtii (Chlamydomonas smithii).